A 166-amino-acid chain; its full sequence is Regulatory protein RecX (166 aa).

This sequence belongs to the RecX family.

The protein resides in the cytoplasm. Functionally, modulates RecA activity. The protein is Regulatory protein RecX of Escherichia coli (strain SMS-3-5 / SECEC).